The chain runs to 98 residues: NADH-ubiquinone oxidoreductase chain 4L (98 aa).

Helical transmembrane passes span 1–21 (MMPI…GTLI), 28–48 (STLL…AMLI), and 59–79 (APLI…ALLV).

This sequence belongs to the complex I subunit 4L family. In terms of assembly, core subunit of respiratory chain NADH dehydrogenase (Complex I) which is composed of 45 different subunits.

Its subcellular location is the mitochondrion inner membrane. It catalyses the reaction a ubiquinone + NADH + 5 H(+)(in) = a ubiquinol + NAD(+) + 4 H(+)(out). Core subunit of the mitochondrial membrane respiratory chain NADH dehydrogenase (Complex I) which catalyzes electron transfer from NADH through the respiratory chain, using ubiquinone as an electron acceptor. Part of the enzyme membrane arm which is embedded in the lipid bilayer and involved in proton translocation. This is NADH-ubiquinone oxidoreductase chain 4L (MT-ND4L) from Petaurus breviceps (Australian sugar glider).